Reading from the N-terminus, the 318-residue chain is Taste receptor type 2 member 60 (318 aa).

Residues 1–7 (MNGDHMV) lie on the Extracellular side of the membrane. The chain crosses the membrane as a helical span at residues 8 to 28 (LGSSVTDKKAIILVTILLLLR). Residues 29–40 (LVAIAGNGFITA) lie on the Cytoplasmic side of the membrane. A helical transmembrane segment spans residues 41–61 (ALGVEWVLRRMLLPCDKLLVS). The Extracellular portion of the chain corresponds to 62–88 (LGASHFCLQSVVMGKTIYVFLYPMAFP). A helical transmembrane segment spans residues 89 to 109 (YNPVLQFLAFQWDFLNAATLW). The Cytoplasmic segment spans residues 110 to 128 (FSTWLSVFYCVKIATFTHP). The chain crosses the membrane as a helical span at residues 129–149 (VFFWLKHKLSGWLPWMVFSYV). At 150-183 (GLSSFTTILFFIGNHRMYQNYLKNHLQPWNVTGN) the chain is on the extracellular side. N-linked (GlcNAc...) asparagine glycosylation occurs at Asn-179. The helical transmembrane segment at 184–204 (SIRSYCEKFYLFPLKMITWTM) threads the bilayer. Over 205–234 (PTAVFFICMILLITSLGRHMKKALLTTSGF) the chain is Cytoplasmic. Residues 235–255 (REPSVQAHIKALLALLSFAML) form a helical membrane-spanning segment. Topologically, residues 256 to 264 (FISYFLSLV) are extracellular. Residues 265–285 (FSAAGIFPPLDFKFWVWESVI) form a helical membrane-spanning segment. The Cytoplasmic portion of the chain corresponds to 286–318 (YLCAAVHPIILLFSNCRLRAVLKSRRSSRCGTP).

Belongs to the G-protein coupled receptor T2R family.

It is found in the membrane. In terms of biological role, receptor that may play a role in the perception of bitterness and is gustducin-linked. May play a role in sensing the chemical composition of the gastrointestinal content. The activity of this receptor may stimulate alpha gustducin, mediate PLC-beta-2 activation and lead to the gating of TRPM5. The protein is Taste receptor type 2 member 60 (TAS2R60) of Pan troglodytes (Chimpanzee).